A 409-amino-acid polypeptide reads, in one-letter code: MSFIATPQFMHFDEPLPLQSGGSIADYDLAFETYGQLNADKSNAIVVCHALNASHHVAGSYEGQPKSEGWWDNMIGPGKPVDTDKFFVIGINNLGSCFGSTGPMHTNPATGKPYGADFPVVTVEDWVDAQARLLDRLGIQTLAAVLGGSLGGMQALSWSLRYPERMRHAVVVASAPNLNAENIAFNEVARRAIVTDPDFNGGHFYEHGVVPARGLRIARMVGHITYLSDDVMNQKFGRSLRAPTLPAARGSLPPEGTDPTRGGPASDRRDYLYSTQDVEFQIESYLRYQGEKFSGYFDANTYLLITRALDYFDPARCHDGDLTRALAVAKARFLLVSFTTDWRFAPARSREIVKSLLENNRDVSYAEIDAPHGHDAFLLDDPRYMSVMRSYFEGIAKELKTTERAGGAA.

The AB hydrolase-1 domain maps to 43–380 (NAIVVCHALN…PHGHDAFLLD (338 aa)). The active-site Nucleophile is Ser-149. Position 219 (Arg-219) interacts with substrate. Residues 244–268 (TLPAARGSLPPEGTDPTRGGPASDR) are disordered. Residues Asp-341 and His-374 contribute to the active site. A substrate-binding site is contributed by Asp-375.

The protein belongs to the AB hydrolase superfamily. MetX family. In terms of assembly, homodimer.

It is found in the cytoplasm. The catalysed reaction is L-homoserine + succinyl-CoA = O-succinyl-L-homoserine + CoA. It functions in the pathway amino-acid biosynthesis; L-methionine biosynthesis via de novo pathway; O-succinyl-L-homoserine from L-homoserine: step 1/1. In terms of biological role, transfers a succinyl group from succinyl-CoA to L-homoserine, forming succinyl-L-homoserine. This chain is Homoserine O-succinyltransferase, found in Comamonas testosteroni (strain DSM 14576 / KF-1) (Pseudomonas testosteroni).